Here is a 245-residue protein sequence, read N- to C-terminus: 1-(5-phosphoribosyl)-5-[(5-phosphoribosylamino)methylideneamino] imidazole-4-carboxamide isomerase (245 aa).

The Proton acceptor role is filled by D12. Catalysis depends on D131, which acts as the Proton donor.

Belongs to the HisA/HisF family.

The protein localises to the cytoplasm. It carries out the reaction 1-(5-phospho-beta-D-ribosyl)-5-[(5-phospho-beta-D-ribosylamino)methylideneamino]imidazole-4-carboxamide = 5-[(5-phospho-1-deoxy-D-ribulos-1-ylimino)methylamino]-1-(5-phospho-beta-D-ribosyl)imidazole-4-carboxamide. It participates in amino-acid biosynthesis; L-histidine biosynthesis; L-histidine from 5-phospho-alpha-D-ribose 1-diphosphate: step 4/9. The chain is 1-(5-phosphoribosyl)-5-[(5-phosphoribosylamino)methylideneamino] imidazole-4-carboxamide isomerase from Thermobifida fusca (strain YX).